Consider the following 311-residue polypeptide: Insulin-like growth factor-binding protein 2 (311 aa).

An N-terminal signal peptide occupies residues 1–36 (MALGGVGRGGAARAAWPRLLLAALAPALALAGPALP). Positions 38–120 (VLFRCPPCTA…VQGQGTCARP (83 aa)) constitute an IGFBP N-terminal domain. 6 disulfides stabilise this stretch: C42-C70, C45-C72, C53-C73, C61-C76, C84-C97, and C91-C117. 2 disordered regions span residues 112–168 (QGQG…PLKT) and 188–210 (GKVGKAHHNHEDSKKSRMPTGRT). Residues 209 to 291 (RTPCQQELDQ…APTIRGDPEC (83 aa)) form the Thyroglobulin type-1 domain. 3 cysteine pairs are disulfide-bonded: C212–C246, C257–C268, and C270–C291. The Cell attachment site signature appears at 286–288 (RGD).

In terms of assembly, binds IGF2 more than IGF1.

The protein resides in the secreted. In terms of biological role, inhibits IGF-mediated growth and developmental rates. IGF-binding proteins prolong the half-life of the IGFs and have been shown to either inhibit or stimulate the growth promoting effects of the IGFs on cell culture. They alter the interaction of IGFs with their cell surface receptors. In Gallus gallus (Chicken), this protein is Insulin-like growth factor-binding protein 2 (IGFBP2).